We begin with the raw amino-acid sequence, 157 residues long: Protein E6 (157 aa).

Zinc fingers lie at residues 41–77 (CNFC…CRVC) and 114–150 (CQTC…CRQC).

The protein belongs to the papillomaviridae E6 protein family. As to quaternary structure, forms homodimers. Interacts with ubiquitin-protein ligase UBE3A/E6-AP; this interaction stimulates UBE3A ubiquitin activity. Interacts with host BAK1.

The protein localises to the host cytoplasm. It is found in the host nucleus. Plays a major role in the induction and maintenance of cellular transformation. E6 associates with host UBE3A/E6-AP ubiquitin-protein ligase and modulates its activity. Protects host keratinocytes from apoptosis by mediating the degradation of host BAK1. May also inhibit host immune response. This chain is Protein E6, found in Human papillomavirus type 5b.